Reading from the N-terminus, the 557-residue chain is Carotenoid-cleaving dioxygenase, mitochondrial (557 aa).

Fe cation is bound by residues H203, H263, H334, and H551.

This sequence belongs to the carotenoid oxygenase family. It depends on Fe(2+) as a cofactor.

The protein localises to the mitochondrion. It carries out the reaction all-trans-beta-carotene + O2 = beta-ionone + all-trans-10'-apo-beta-carotenal. It catalyses the reaction 5-cis-lycopene + O2 = 5-cis-10'-apo-lycopenal + (3E,5E)-6,10-dimethylundeca-3,5,9-trien-2-one. The catalysed reaction is 13-cis-lycopene + O2 = 13-cis-10'-apo-lycopenal + (3E,5E)-6,10-dimethylundeca-3,5,9-trien-2-one. The enzyme catalyses lutein + O2 = (3R,6R)-hydroxy-alpha-ionone + (3R)-3-hydroxy-10'-apo-beta-carotenal. It carries out the reaction lutein + O2 = (3R,6R)-3-hydroxy-10'-apo-alpha-carotenal + (3R)-hydroxy-beta-ionone. It catalyses the reaction all-trans-zeaxanthin + 2 O2 = 4,9-dimethyldodeca-2,4,6,8,10-pentaenedial + 2 (3R)-hydroxy-beta-ionone. The catalysed reaction is all-trans-zeaxanthin + O2 = (3R)-3-hydroxy-10'-apo-beta-carotenal + (3R)-hydroxy-beta-ionone. The enzyme catalyses beta-cryptoxanthin + O2 = all-trans-10'-apo-beta-carotenal + (3R)-hydroxy-beta-ionone. It carries out the reaction all-trans-10'-apo-beta-carotenal + O2 = beta-ionone + 4,9-dimethyldodeca-2,4,6,8,10-pentaenedial. It catalyses the reaction (3R)-3-hydroxy-10'-apo-beta-carotenal + O2 = 4,9-dimethyldodeca-2,4,6,8,10-pentaenedial + (3R)-hydroxy-beta-ionone. The catalysed reaction is (3R,6R)-3-hydroxy-10'-apo-alpha-carotenal + O2 = (3R,6R)-hydroxy-alpha-ionone + 4,9-dimethyldodeca-2,4,6,8,10-pentaenedial. In terms of biological role, broad specificity mitochondrial dioxygenase that mediates the asymmetric oxidative cleavage of carotenoids. Cleaves carotenes (pure hydrocarbon carotenoids) such as all-trans-beta-carotene and lycopene as well as xanthophylls (oxygenated carotenoids) such as zeaxanthin, lutein and beta-cryptoxanthin at both the 9,10 and the 9',10' carbon-carbon double bond. Through its function in carotenoids metabolism regulates oxidative stress and the production of important signaling molecules. The chain is Carotenoid-cleaving dioxygenase, mitochondrial from Pongo abelii (Sumatran orangutan).